The chain runs to 206 residues: Ras-related protein Rab-7a (206 aa).

Position 15-22 (15-22 (GDSGVGKT)) interacts with GTP. A phosphoserine mark is found at serine 17 and serine 23. Phosphothreonine occurs at positions 34, 40, and 64. GTP contacts are provided by residues 34–40 (TQQYRAT) and 63–67 (DTAGQ). Positions 37-45 (YRATVGADF) match the Effector region motif. The residue at position 72 (serine 72) is a Phosphoserine. Tyrosine 78 and tyrosine 88 each carry phosphotyrosine. GTP-binding positions include 125–128 (NKLD) and 157–158 (AK). Residues cysteine 205 and cysteine 206 are each lipidated (S-geranylgeranyl cysteine).

It belongs to the small GTPase superfamily. Rab family.

It localises to the cytoplasmic vesicle. The protein localises to the phagosome membrane. The protein resides in the late endosome membrane. Its subcellular location is the lysosome membrane. It is found in the autophagosome membrane. It localises to the lipid droplet. The enzyme catalyses GTP + H2O = GDP + phosphate + H(+). Small GTPase which cycles between active GTP-bound and inactive GDP-bound states. In its active state, binds to a variety of effector proteins playing a key role in the regulation of endo-lysosomal trafficking. Governs early-to-late endosomal maturation, microtubule minus-end as well as plus-end directed endosomal migration and positioning, and endosome-lysosome transport through different protein-protein interaction cascades. Involved in lipophagy, a cytosolic lipase-independent autophagic pathway. Plays a role in phagocyte formation and acidification. This Paramecium octaurelia protein is Ras-related protein Rab-7a.